Reading from the N-terminus, the 133-residue chain is Small ribosomal subunit protein uS19 (133 aa).

This sequence belongs to the universal ribosomal protein uS19 family.

Protein S19 forms a complex with S13 that binds strongly to the 16S ribosomal RNA. The sequence is that of Small ribosomal subunit protein uS19 from Thermococcus sibiricus (strain DSM 12597 / MM 739).